The sequence spans 257 residues: Thiazole synthase (257 aa).

Lys-100 (schiff-base intermediate with DXP) is an active-site residue. 1-deoxy-D-xylulose 5-phosphate-binding positions include Gly-161, 187 to 188 (AG), and 209 to 210 (NT).

This sequence belongs to the ThiG family. Homotetramer. Forms heterodimers with either ThiH or ThiS.

Its subcellular location is the cytoplasm. It catalyses the reaction [ThiS sulfur-carrier protein]-C-terminal-Gly-aminoethanethioate + 2-iminoacetate + 1-deoxy-D-xylulose 5-phosphate = [ThiS sulfur-carrier protein]-C-terminal Gly-Gly + 2-[(2R,5Z)-2-carboxy-4-methylthiazol-5(2H)-ylidene]ethyl phosphate + 2 H2O + H(+). It participates in cofactor biosynthesis; thiamine diphosphate biosynthesis. Functionally, catalyzes the rearrangement of 1-deoxy-D-xylulose 5-phosphate (DXP) to produce the thiazole phosphate moiety of thiamine. Sulfur is provided by the thiocarboxylate moiety of the carrier protein ThiS. In vitro, sulfur can be provided by H(2)S. The sequence is that of Thiazole synthase from Zymomonas mobilis subsp. mobilis (strain ATCC 31821 / ZM4 / CP4).